The following is a 211-amino-acid chain: Wound-induced protein WIN2 (211 aa).

Positions 1–25 are cleaved as a signal peptide; sequence MVKLSCGPILLALVLCISLTSVANA. The region spanning 26 to 68 is the Chitin-binding type-1 domain; sequence QQCGRQRGGALCGNNLCCSQFGWCGSTPEYCSPSQGCQSQCTG. 4 cysteine pairs are disulfide-bonded: Cys28/Cys43, Cys37/Cys49, Cys42/Cys56, and Cys62/Cys66. Residues 77 to 198 form the Barwin domain; the sequence is GSAQNVRATY…VNYQFVNCGD (122 aa).

This is Wound-induced protein WIN2 (WIN2) from Solanum tuberosum (Potato).